The sequence spans 188 residues: Adenine phosphoribosyltransferase (188 aa).

The protein belongs to the purine/pyrimidine phosphoribosyltransferase family. As to quaternary structure, homodimer.

It is found in the cytoplasm. The catalysed reaction is AMP + diphosphate = 5-phospho-alpha-D-ribose 1-diphosphate + adenine. It participates in purine metabolism; AMP biosynthesis via salvage pathway; AMP from adenine: step 1/1. Catalyzes a salvage reaction resulting in the formation of AMP, that is energically less costly than de novo synthesis. The polypeptide is Adenine phosphoribosyltransferase (Frankia casuarinae (strain DSM 45818 / CECT 9043 / HFP020203 / CcI3)).